Consider the following 142-residue polypeptide: Large ribosomal subunit protein uL13 (142 aa).

It belongs to the universal ribosomal protein uL13 family. Part of the 50S ribosomal subunit.

Its function is as follows. This protein is one of the early assembly proteins of the 50S ribosomal subunit, although it is not seen to bind rRNA by itself. It is important during the early stages of 50S assembly. In Laribacter hongkongensis (strain HLHK9), this protein is Large ribosomal subunit protein uL13.